A 647-amino-acid chain; its full sequence is 1-deoxy-D-xylulose-5-phosphate synthase (647 aa).

Residues histidine 74 and 115–117 contribute to the thiamine diphosphate site; that span reads GHS. Aspartate 146 is a Mg(2+) binding site. Residues 147 to 148, asparagine 175, tyrosine 286, and glutamate 367 each bind thiamine diphosphate; that span reads GA. Asparagine 175 contributes to the Mg(2+) binding site.

It belongs to the transketolase family. DXPS subfamily. In terms of assembly, homodimer. The cofactor is Mg(2+). Thiamine diphosphate serves as cofactor.

The enzyme catalyses D-glyceraldehyde 3-phosphate + pyruvate + H(+) = 1-deoxy-D-xylulose 5-phosphate + CO2. It participates in metabolic intermediate biosynthesis; 1-deoxy-D-xylulose 5-phosphate biosynthesis; 1-deoxy-D-xylulose 5-phosphate from D-glyceraldehyde 3-phosphate and pyruvate: step 1/1. Functionally, catalyzes the acyloin condensation reaction between C atoms 2 and 3 of pyruvate and glyceraldehyde 3-phosphate to yield 1-deoxy-D-xylulose-5-phosphate (DXP). The chain is 1-deoxy-D-xylulose-5-phosphate synthase from Heliobacterium modesticaldum (strain ATCC 51547 / Ice1).